Consider the following 120-residue polypeptide: UPF0382 membrane protein SSP2132 (120 aa).

The next 4 membrane-spanning stretches (helical) occupy residues 3–23, 46–66, 69–89, and 94–114; these read VFIILGALNAMMAVGTGAFGA, MYHGLGLLAIGIISGTTSINV, VGWLLFFGIVFFSGSLYILAL, and IIGAITPIGGVLFIVGWLMLV.

This sequence belongs to the UPF0382 family.

It localises to the cell membrane. In Staphylococcus saprophyticus subsp. saprophyticus (strain ATCC 15305 / DSM 20229 / NCIMB 8711 / NCTC 7292 / S-41), this protein is UPF0382 membrane protein SSP2132.